Reading from the N-terminus, the 121-residue chain is Small ribosomal subunit protein uS13 (121 aa).

A disordered region spans residues 97 to 121 (VRGQRTRTNARTRRGARKTVAGRKK). Over residues 100–121 (QRTRTNARTRRGARKTVAGRKK) the composition is skewed to basic residues.

The protein belongs to the universal ribosomal protein uS13 family. As to quaternary structure, part of the 30S ribosomal subunit. Forms a loose heterodimer with protein S19. Forms two bridges to the 50S subunit in the 70S ribosome.

Its function is as follows. Located at the top of the head of the 30S subunit, it contacts several helices of the 16S rRNA. In the 70S ribosome it contacts the 23S rRNA (bridge B1a) and protein L5 of the 50S subunit (bridge B1b), connecting the 2 subunits; these bridges are implicated in subunit movement. Contacts the tRNAs in the A and P-sites. The polypeptide is Small ribosomal subunit protein uS13 (Prochlorococcus marinus (strain NATL2A)).